We begin with the raw amino-acid sequence, 396 residues long: Probable sugar efflux transporter (396 aa).

12 consecutive transmembrane segments (helical) span residues 15 to 35, 51 to 71, 84 to 104, 109 to 129, 137 to 157, 168 to 188, 209 to 229, 245 to 265, 276 to 296, 297 to 317, 333 to 353, and 365 to 385; these read VLIMACAGFIFNTTEFVPVAM, GLMMTVYAWTVLIMSLPAMLA, LFIIFIVGHILSVIAWNFWIL, MCIALAHSVFWSITASLVMRI, QALGMLAIGTALATILGLPIG, VTFGIIAVLALSIMFLIIRLL, PLLLWLYVTTAIVISAHFTAY, NFATAVLLVFGFSGIAASLLF, FIVVSMSLLMFSLLLLLFSTE, TIIAMFSLVFIWGIGISCIGL, VATAIYSGIFNAGIGAGALFG, and IGYTGAALGLIGFIIFITTHL.

It belongs to the major facilitator superfamily. SotB (TC 2.A.1.2) family.

The protein resides in the cell inner membrane. Its function is as follows. Involved in the efflux of sugars. The physiological role may be the reduction of the intracellular concentration of toxic sugars or sugar metabolites. The protein is Probable sugar efflux transporter of Haemophilus influenzae (strain PittGG).